The following is a 495-amino-acid chain: L-arabinose isomerase (495 aa).

Mn(2+)-binding residues include glutamate 305, glutamate 332, histidine 349, and histidine 448.

The protein belongs to the arabinose isomerase family. Mn(2+) is required as a cofactor.

The catalysed reaction is beta-L-arabinopyranose = L-ribulose. The protein operates within carbohydrate degradation; L-arabinose degradation via L-ribulose; D-xylulose 5-phosphate from L-arabinose (bacterial route): step 1/3. Catalyzes the conversion of L-arabinose to L-ribulose. This Actinobacillus succinogenes (strain ATCC 55618 / DSM 22257 / CCUG 43843 / 130Z) protein is L-arabinose isomerase.